A 186-amino-acid polypeptide reads, in one-letter code: ATP synthase subunit b 3 (186 aa).

Residues 5 to 25 (LLPALLTFSATPALAAKGPFF) form a helical membrane-spanning segment.

The protein belongs to the ATPase B chain family. F-type ATPases have 2 components, F(1) - the catalytic core - and F(0) - the membrane proton channel. F(1) has five subunits: alpha(3), beta(3), gamma(1), delta(1), epsilon(1). F(0) has three main subunits: a(1), b(2) and c(10-14). The alpha and beta chains form an alternating ring which encloses part of the gamma chain. F(1) is attached to F(0) by a central stalk formed by the gamma and epsilon chains, while a peripheral stalk is formed by the delta and b chains.

It localises to the cell inner membrane. Functionally, f(1)F(0) ATP synthase produces ATP from ADP in the presence of a proton or sodium gradient. F-type ATPases consist of two structural domains, F(1) containing the extramembraneous catalytic core and F(0) containing the membrane proton channel, linked together by a central stalk and a peripheral stalk. During catalysis, ATP synthesis in the catalytic domain of F(1) is coupled via a rotary mechanism of the central stalk subunits to proton translocation. In terms of biological role, component of the F(0) channel, it forms part of the peripheral stalk, linking F(1) to F(0). The chain is ATP synthase subunit b 3 from Dinoroseobacter shibae (strain DSM 16493 / NCIMB 14021 / DFL 12).